The primary structure comprises 230 residues: V-type proton ATPase subunit E (230 aa).

Belongs to the V-ATPase E subunit family. As to quaternary structure, V-ATPase is a heteromultimeric enzyme composed of a peripheral catalytic V1 complex (components A to H) attached to an integral membrane V0 proton pore complex (components: a, c, c', c'' and d).

In terms of biological role, subunit of the peripheral V1 complex of vacuolar ATPase essential for assembly or catalytic function. V-ATPase is responsible for acidifying a variety of intracellular compartments in eukaryotic cells. The protein is V-type proton ATPase subunit E (VATE) of Citrus unshiu (Satsuma mandarin).